We begin with the raw amino-acid sequence, 85 residues long: Large ribosomal subunit protein bL27 (85 aa).

The tract at residues 1–22 (MAHKKAGGSTKNGRDSESKRLG) is disordered.

Belongs to the bacterial ribosomal protein bL27 family.

This Idiomarina loihiensis (strain ATCC BAA-735 / DSM 15497 / L2-TR) protein is Large ribosomal subunit protein bL27.